The chain runs to 517 residues: Probable bifunctional methylthioribulose-1-phosphate dehydratase/enolase-phosphatase E1 (517 aa).

The interval 1–242 is methylthioribulose-1-phosphate dehydratase; it reads MACSGCSCEA…CIKLYQLGID (242 aa). Residue C114 coordinates substrate. The Zn(2+) site is built by H132 and H134. The active-site Proton donor/acceptor; for methylthioribulose-1-phosphate dehydratase activity is E157. H207 is a binding site for Zn(2+). The interval 278-517 is enolase-phosphatase E1; sequence VVLDIEGTTT…FRTIKSFSEI (240 aa). Mg(2+) is bound by residues D281 and E283. Substrate-binding positions include 416 to 417 and K450; that span reads SS. Residue D476 participates in Mg(2+) binding.

It in the N-terminal section; belongs to the aldolase class II family. MtnB subfamily. The protein in the C-terminal section; belongs to the HAD-like hydrolase superfamily. MasA/MtnC family. The cofactor is Zn(2+). Mg(2+) is required as a cofactor.

It catalyses the reaction 5-(methylsulfanyl)-D-ribulose 1-phosphate = 5-methylsulfanyl-2,3-dioxopentyl phosphate + H2O. The enzyme catalyses 5-methylsulfanyl-2,3-dioxopentyl phosphate + H2O = 1,2-dihydroxy-5-(methylsulfanyl)pent-1-en-3-one + phosphate. Its pathway is amino-acid biosynthesis; L-methionine biosynthesis via salvage pathway; L-methionine from S-methyl-5-thio-alpha-D-ribose 1-phosphate: step 2/6. It functions in the pathway amino-acid biosynthesis; L-methionine biosynthesis via salvage pathway; L-methionine from S-methyl-5-thio-alpha-D-ribose 1-phosphate: step 3/6. The protein operates within amino-acid biosynthesis; L-methionine biosynthesis via salvage pathway; L-methionine from S-methyl-5-thio-alpha-D-ribose 1-phosphate: step 4/6. In Zea mays (Maize), this protein is Probable bifunctional methylthioribulose-1-phosphate dehydratase/enolase-phosphatase E1.